The chain runs to 74 residues: Small ribosomal subunit protein bS18 (74 aa).

It belongs to the bacterial ribosomal protein bS18 family. As to quaternary structure, part of the 30S ribosomal subunit. Forms a tight heterodimer with protein bS6.

In terms of biological role, binds as a heterodimer with protein bS6 to the central domain of the 16S rRNA, where it helps stabilize the platform of the 30S subunit. The chain is Small ribosomal subunit protein bS18 from Natranaerobius thermophilus (strain ATCC BAA-1301 / DSM 18059 / JW/NM-WN-LF).